A 148-amino-acid chain; its full sequence is MGRLHSHRHGKSHSIRPSSPKAPSWIQGPGEVEDLIVKYAKEGLAPSQIGSKLRDQHAIPLTRPITGKSVTQIMEEHGATPELPEDLNNIVQKAVGLQRHLRANKGDRRNVRSLELIEAKVHRLDVYYKRIGRIPKDWKYKSVVAQLE.

A compositionally biased stretch (basic residues) spans 1-14; that stretch reads MGRLHSHRHGKSHS. Residues 1-27 are disordered; that stretch reads MGRLHSHRHGKSHSIRPSSPKAPSWIQ.

It belongs to the universal ribosomal protein uS15 family. As to quaternary structure, part of the 30S ribosomal subunit.

The polypeptide is Small ribosomal subunit protein uS15 (Cenarchaeum symbiosum (strain A)).